The primary structure comprises 63 residues: Metallothionein-2 (63 aa).

Residues 1 to 30 (MDPQDCTCAAGDSCSCAGSCKCKNCRCQSC) form a beta region. Positions 6, 8, 14, 16, 20, 22, 25, 27, 30, 34, 35, 37, 38, 42, 45, 49, 51, 59, 61, and 62 each coordinate a divalent metal cation. Residues 31-63 (RKSCCSCCPASCSNCAKGCVCKEPSSSKCSCCH) form an alpha region.

This sequence belongs to the metallothionein superfamily. Type 1 family.

In terms of biological role, metallothioneins have a high content of cysteine residues that bind various heavy metals. This is Metallothionein-2 from Columba livia (Rock dove).